The following is a 381-amino-acid chain: Guanine nucleotide-binding protein G(olf) subunit alpha (381 aa).

The segment at 1 to 25 (MGCLGNSSKTAEDQGVDEKERREAN) is disordered. The N-palmitoyl glycine moiety is linked to residue Gly2. Cys3 carries the S-palmitoyl cysteine lipid modification. Basic and acidic residues predominate over residues 10-25 (TAEDQGVDEKERREAN). A G-alpha domain is found at 41-381 (ATHRLLLLGA…RMHLKQYELL (341 aa)). The interval 44–57 (RLLLLGAGESGKST) is G1 motif. GTP-binding residues include Glu52, Ser53, Gly54, Lys55, Ser56, and Thr57. Ser56 contributes to the Mg(2+) binding site. Thr178 carries the post-translational modification Phosphothreonine. Residues 183-191 (DLLRCRVLT) are G2 motif. GTP is bound by residues Leu185, Arg186, and Thr191. Mg(2+) contacts are provided by Thr191 and Asp210. The tract at residues 206-215 (FHMFDVGGQR) is G3 motif. GTP is bound by residues Gly213, Asn279, Lys280, Asp282, and Ala353. The segment at 275-282 (ILFLNKQD) is G4 motif. The tract at residues 351-356 (TCAVDT) is G5 motif.

It belongs to the G-alpha family. G(s) subfamily. As to quaternary structure, g proteins are composed of 3 units; alpha, beta and gamma. The alpha chain contains the guanine nucleotide binding site. Interacts with GAS2L2. Interacts (GDP-bound form) with RIC8B (via C-terminus); promoting GNAL folding and association with the plasma membrane.

It is found in the cell membrane. It catalyses the reaction GTP + H2O = GDP + phosphate + H(+). In terms of biological role, guanine nucleotide-binding protein (G protein) involved as transducer in olfactory signal transduction controlled by G protein-coupled receptors (GPCRs). Contains the guanine nucleotide binding site and alternates between an active, GTP-bound state and an inactive, GDP-bound state. Signaling by an activated GPCR promotes GDP release and GTP binding. The alpha subunit has a low GTPase activity that converts bound GTP to GDP, thereby terminating the signal. Both GDP release and GTP hydrolysis are modulated by numerous regulatory proteins. GNAL/G(olf) alpha specifically mediates olfactory signal transduction within the olfactory neuroepithelium and the basal ganglia following GPCRs activation. Acts by promoting the specific activation of adenylyl cyclase ADCY3, resulting in increased levels of the signaling molecule cAMP. The polypeptide is Guanine nucleotide-binding protein G(olf) subunit alpha (Mus musculus (Mouse)).